Reading from the N-terminus, the 130-residue chain is Small ribosomal subunit protein uS9 (130 aa).

It belongs to the universal ribosomal protein uS9 family.

In Anaeromyxobacter dehalogenans (strain 2CP-1 / ATCC BAA-258), this protein is Small ribosomal subunit protein uS9.